The chain runs to 405 residues: Phosphoglycerate kinase (405 aa).

Substrate-binding positions include 21–23, R38, 59–62, R116, and R156; these read DFN and HQSR. ATP is bound by residues E330 and 355–358; that span reads GGHT.

Belongs to the phosphoglycerate kinase family. Monomer.

The protein resides in the cytoplasm. The enzyme catalyses (2R)-3-phosphoglycerate + ATP = (2R)-3-phospho-glyceroyl phosphate + ADP. The protein operates within carbohydrate degradation; glycolysis; pyruvate from D-glyceraldehyde 3-phosphate: step 2/5. The polypeptide is Phosphoglycerate kinase (Methanocorpusculum labreanum (strain ATCC 43576 / DSM 4855 / Z)).